The chain runs to 257 residues: MTEILPIPAFNDNYIWSIQSDQGDAWVVDPGDAQPVLRHLAENHLTLRGILITHHHHDHTGGVNELLANHPVPVYGFMRSAIKAITVPLQEGDRVDLGDFSLEVLETPGHTLDHISYFGDIAGAPRLFCGDTLFSAGCGRLFEGDPAMMRQSLDKLKRLPGDTYIYCAHEYTLSNLRFAQAVMPESDEVNKRKLQCESLRARGVPTLPAVLGEEIAYNPFLMAEHPVVRRMAQEVSGSPCATATDTFAAIRAWKDRF.

Residues histidine 54, histidine 56, aspartate 58, histidine 59, histidine 110, aspartate 131, and histidine 169 each contribute to the Zn(2+) site.

The protein belongs to the metallo-beta-lactamase superfamily. Glyoxalase II family. As to quaternary structure, monomer. Requires Zn(2+) as cofactor.

The enzyme catalyses an S-(2-hydroxyacyl)glutathione + H2O = a 2-hydroxy carboxylate + glutathione + H(+). It participates in secondary metabolite metabolism; methylglyoxal degradation; (R)-lactate from methylglyoxal: step 2/2. In terms of biological role, thiolesterase that catalyzes the hydrolysis of S-D-lactoyl-glutathione to form glutathione and D-lactic acid. The sequence is that of Hydroxyacylglutathione hydrolase from Hahella chejuensis (strain KCTC 2396).